The following is a 129-amino-acid chain: Glycine cleavage system H protein (129 aa).

The 83-residue stretch at 24–106 (TVVVGVTSYA…YGDGWLIKVR (83 aa)) folds into the Lipoyl-binding domain. The residue at position 65 (lysine 65) is an N6-lipoyllysine.

This sequence belongs to the GcvH family. As to quaternary structure, the glycine cleavage system is composed of four proteins: P, T, L and H. The cofactor is (R)-lipoate.

The glycine cleavage system catalyzes the degradation of glycine. The H protein shuttles the methylamine group of glycine from the P protein to the T protein. This is Glycine cleavage system H protein from Gloeobacter violaceus (strain ATCC 29082 / PCC 7421).